A 275-amino-acid chain; its full sequence is N-(5'-phosphoribosyl)anthranilate isomerase 2, chloroplastic (275 aa).

The transit peptide at 1–32 (MSTGISTDLHVHFGALNFSKTYKSGLSNRTVS) directs the protein to the chloroplast.

This sequence belongs to the TrpF family. As to expression, expressed in roots and shoots.

Its subcellular location is the plastid. The protein resides in the chloroplast. It carries out the reaction N-(5-phospho-beta-D-ribosyl)anthranilate = 1-(2-carboxyphenylamino)-1-deoxy-D-ribulose 5-phosphate. It functions in the pathway amino-acid biosynthesis; L-tryptophan biosynthesis; L-tryptophan from chorismate: step 3/5. The polypeptide is N-(5'-phosphoribosyl)anthranilate isomerase 2, chloroplastic (PAI2) (Arabidopsis thaliana (Mouse-ear cress)).